The sequence spans 632 residues: tRNA uridine 5-carboxymethylaminomethyl modification enzyme MnmG (632 aa).

Residues 15-20 (GAGHAG), I127, and S182 each bind FAD. An NAD(+)-binding site is contributed by 276 to 290 (GPRYCPSIEDKIVRF). Q373 provides a ligand contact to FAD.

It belongs to the MnmG family. In terms of assembly, homodimer. Heterotetramer of two MnmE and two MnmG subunits. The cofactor is FAD.

It localises to the cytoplasm. In terms of biological role, NAD-binding protein involved in the addition of a carboxymethylaminomethyl (cmnm) group at the wobble position (U34) of certain tRNAs, forming tRNA-cmnm(5)s(2)U34. The protein is tRNA uridine 5-carboxymethylaminomethyl modification enzyme MnmG of Streptococcus pyogenes serotype M28 (strain MGAS6180).